A 485-amino-acid chain; its full sequence is MLHIYNTLSRTKEPFKPAHAGQVRMYVCGMTVYDYCHLGHARMLVAFDVVQRWLRASGLAVDYVRNITDIDDKIIRRAVETGRRIGEVTEYYIAAMHADERALGVQPPDREPRATQYVGEMLDIIGRLESKGLAYRAEDGDVNYAVRGFADYGKLSGKSLDDLRAGERVAVGSAKRDPLDFVLWKSAKPQEPDDTKWESPYGLGRPGWHIECSAMSKTLLGLPLDIHGGGPDLKFPHHENEIAQTEGAFGGALANVWMHCGPLMVDADKMSKSLGNFRTIRQTIAQGALSDTQAEYAVNPREAEMLRFFIVRNHYRSPQNYAPDNLVDAQNALDRLYQALQNTAADGQGVDWSEPQAQAFKAAMDDDFNSSGAVAALFELASEANRTGSARAAGQLKALGAVLGLLQQDPPAYFQSPTRYSAAAREQGAPAAALDAAAIEARIAERAAAKAARDFARADAIRAELRAAGVELDDKPGGLTQWRRA.

Cys28 is a Zn(2+) binding site. Positions 30 to 40 (MTVYDYCHLGH) match the 'HIGH' region motif. Zn(2+) contacts are provided by Cys212, His237, and Glu241. Positions 269–273 (KMSKS) match the 'KMSKS' region motif. Lys272 lines the ATP pocket.

The protein belongs to the class-I aminoacyl-tRNA synthetase family. Monomer. Requires Zn(2+) as cofactor.

The protein resides in the cytoplasm. It catalyses the reaction tRNA(Cys) + L-cysteine + ATP = L-cysteinyl-tRNA(Cys) + AMP + diphosphate. The protein is Cysteine--tRNA ligase of Bordetella bronchiseptica (strain ATCC BAA-588 / NCTC 13252 / RB50) (Alcaligenes bronchisepticus).